The following is a 131-amino-acid chain: MSMSDPIADLLTRIRNAQMVSKATVSVPSSKVKVAIAQVLKDEGYIDGFEVKSESGKTELEITLKYYAGRPVIERIERVSRPGLRVYKGCGSIPQVMNGLGVAIVTTPKGVMTDRKARATGVGGEVLCYVA.

This sequence belongs to the universal ribosomal protein uS8 family. In terms of assembly, part of the 30S ribosomal subunit. Contacts proteins S5 and S12.

Functionally, one of the primary rRNA binding proteins, it binds directly to 16S rRNA central domain where it helps coordinate assembly of the platform of the 30S subunit. The polypeptide is Small ribosomal subunit protein uS8 (Acidovorax sp. (strain JS42)).